The sequence spans 513 residues: Beta-amyrin 24-hydroxylase (513 aa).

A helical; Signal-anchor membrane pass occupies residues 1–21 (MLDIKGYLVLFFLWFISTILI). Cysteine 451 provides a ligand contact to heme.

Belongs to the cytochrome P450 family. Heme serves as cofactor.

The protein resides in the membrane. It catalyses the reaction beta-amyrin + reduced [NADPH--hemoprotein reductase] + O2 = 24-hydroxy-beta-amyrin + oxidized [NADPH--hemoprotein reductase] + H2O + H(+). The catalysed reaction is sophoradiol + reduced [NADPH--hemoprotein reductase] + O2 = soyasapogenol B + oxidized [NADPH--hemoprotein reductase] + H2O + H(+). In terms of biological role, heme-containing cytochrome P450 involved in the biosynthesis of soyasaponins. Hydroxylates specifically the C-24 methyl group of the triterpenes beta-amyrin and sophoradiol. No activity with lupeol, butyrospermol, tirucalla-7,21-dien-3beta-ol, taraxasterol, psi-taraxasterol, bauerenol, alpha-amyrin and multiflorenol as substrates. In Glycine max (Soybean), this protein is Beta-amyrin 24-hydroxylase (CYP93E1).